The primary structure comprises 155 residues: Gastrin-releasing peptide (155 aa).

The signal sequence occupies residues 1 to 31 (MEGVLLFWKYRALFFLVLCSLVLCKVHLSQA). Methionine 60 carries the methionine amide modification. A propeptide spanning residues 128–155 (FSGAEDNNLKEMLDYLYQMMNMKENTSS) is cleaved from the precursor.

This sequence belongs to the bombesin/neuromedin-B/ranatensin family. In terms of tissue distribution, brain and stomach. In the stomach GRP was localized, at the base of the gastric pits, to occasional cells whose distribution and appearance were consistent with that of gut neuroendocrine cells.

The protein localises to the secreted. It localises to the cytoplasmic vesicle. It is found in the secretory vesicle lumen. Functionally, stimulates the release of gastrin and other gastrointestinal hormones. The sequence is that of Gastrin-releasing peptide (grp) from Bombina orientalis (Oriental fire-bellied toad).